The following is a 187-amino-acid chain: Orotate phosphoribosyltransferase (187 aa).

Residues arginine 103, lysine 104, lysine 107, and 129–137 contribute to the 5-phospho-alpha-D-ribose 1-diphosphate site; that span reads EDVTTSGGS. Threonine 133 and arginine 161 together coordinate orotate.

This sequence belongs to the purine/pyrimidine phosphoribosyltransferase family. PyrE subfamily. In terms of assembly, homodimer. Mg(2+) is required as a cofactor.

The enzyme catalyses orotidine 5'-phosphate + diphosphate = orotate + 5-phospho-alpha-D-ribose 1-diphosphate. It participates in pyrimidine metabolism; UMP biosynthesis via de novo pathway; UMP from orotate: step 1/2. In terms of biological role, catalyzes the transfer of a ribosyl phosphate group from 5-phosphoribose 1-diphosphate to orotate, leading to the formation of orotidine monophosphate (OMP). The polypeptide is Orotate phosphoribosyltransferase (Methanosarcina mazei (strain ATCC BAA-159 / DSM 3647 / Goe1 / Go1 / JCM 11833 / OCM 88) (Methanosarcina frisia)).